We begin with the raw amino-acid sequence, 1929 residues long: Intraflagellar transport protein 140 (1929 aa).

WD repeat units follow at residues 76 to 116 (QVQV…PSYK) and 119 to 158 (LHQEELCLIKWLSHGRILVTCDVSGQVILYKFSTDTYSFE). Residues 774–795 (LSTPDTGSPAVEAEESPQRQTR) form a disordered region. 3 LRR repeats span residues 957–980 (STSLNLLFVGSSMLFALKTGTFTK), 1019–1044 (ISLLQSIYISSEQRAKVPLLVQSLAE), and 1510–1532 (AQSLELCIKSNRMKELSNLLADI).

Its subcellular location is the cell projection. The protein localises to the cilium. It is found in the flagellum. It localises to the cytoplasm. The protein resides in the cytoskeleton. Its subcellular location is the flagellum axoneme. The protein localises to the flagellum basal body. Component of the intraflagellar transport complex A (IFT-A) involved in flagellar assembly. This Giardia intestinalis (strain ATCC 50803 / WB clone C6) (Giardia lamblia) protein is Intraflagellar transport protein 140.